We begin with the raw amino-acid sequence, 356 residues long: MSTYTYSAGPGMLPTEVMQEIQQHLLTFEYEGVSIIETSHRSASFQRVVDSLEWRLRRLMHIPENYAVLWLQGGATLQFSMIPMNLRKQNRFAYVDTGIWSKKAMEDAKHFGEVDVIHPLVDATGGMSFESSLVQEVDYLHVTLNNTIEGTRFTHIPEIDVPLIADASSNILAEQIDVERFGVIYAGAQKNIGPAGLTVVIIRRDLIQSLQLPSYLQYASHVDTLFNTPSTFSMYAAERVLKWVEDCGGVEAMERLNRQKSDRIYSYLEESTCFSPIVTGERRSLTNIPFSTGNQELDQRFERYALERGLLELGGHRSVGGLRASLYNAMPLEGAERLVDVMRAFEEETHVSHQNI.

Arg41 lines the L-glutamate pocket. Residues 75–76 (AT), Trp100, Thr147, Asp166, and Gln189 contribute to the pyridoxal 5'-phosphate site. The residue at position 190 (Lys190) is an N6-(pyridoxal phosphate)lysine. A pyridoxal 5'-phosphate-binding site is contributed by 227–228 (NT).

This sequence belongs to the class-V pyridoxal-phosphate-dependent aminotransferase family. SerC subfamily. In terms of assembly, homodimer. Requires pyridoxal 5'-phosphate as cofactor.

It localises to the cytoplasm. The catalysed reaction is O-phospho-L-serine + 2-oxoglutarate = 3-phosphooxypyruvate + L-glutamate. It carries out the reaction 4-(phosphooxy)-L-threonine + 2-oxoglutarate = (R)-3-hydroxy-2-oxo-4-phosphooxybutanoate + L-glutamate. The protein operates within amino-acid biosynthesis; L-serine biosynthesis; L-serine from 3-phospho-D-glycerate: step 2/3. Its function is as follows. Catalyzes the reversible conversion of 3-phosphohydroxypyruvate to phosphoserine and of 3-hydroxy-2-oxo-4-phosphonooxybutanoate to phosphohydroxythreonine. The chain is Phosphoserine aminotransferase from Exiguobacterium sp. (strain ATCC BAA-1283 / AT1b).